The following is a 144-amino-acid chain: Putative pre-16S rRNA nuclease (144 aa).

It belongs to the YqgF nuclease family.

It localises to the cytoplasm. Could be a nuclease involved in processing of the 5'-end of pre-16S rRNA. This chain is Putative pre-16S rRNA nuclease, found in Oenococcus oeni (strain ATCC BAA-331 / PSU-1).